The following is a 139-amino-acid chain: Putative nickel-responsive regulator (139 aa).

4 residues coordinate Ni(2+): H79, H90, H92, and C98.

Belongs to the transcriptional regulatory CopG/NikR family. Requires Ni(2+) as cofactor.

Transcriptional regulator. The chain is Putative nickel-responsive regulator from Geotalea uraniireducens (strain Rf4) (Geobacter uraniireducens).